The following is a 282-amino-acid chain: Nucleotide-binding protein Ping_2894 (282 aa).

8-15 (GRSGSGKT) is a binding site for ATP. 56–59 (DIRN) contributes to the GTP binding site.

The protein belongs to the RapZ-like family.

In terms of biological role, displays ATPase and GTPase activities. The polypeptide is Nucleotide-binding protein Ping_2894 (Psychromonas ingrahamii (strain DSM 17664 / CCUG 51855 / 37)).